A 684-amino-acid chain; its full sequence is UvrABC system protein B (684 aa).

Positions Glu-30–Arg-188 constitute a Helicase ATP-binding domain. Gly-43–Thr-50 is a binding site for ATP. Positions Tyr-96 to Ile-119 match the Beta-hairpin motif. A Helicase C-terminal domain is found at Gln-435–Leu-601. Positions Tyr-641–Arg-676 constitute a UVR domain.

The protein belongs to the UvrB family. As to quaternary structure, forms a heterotetramer with UvrA during the search for lesions. Interacts with UvrC in an incision complex.

The protein resides in the cytoplasm. Its function is as follows. The UvrABC repair system catalyzes the recognition and processing of DNA lesions. A damage recognition complex composed of 2 UvrA and 2 UvrB subunits scans DNA for abnormalities. Upon binding of the UvrA(2)B(2) complex to a putative damaged site, the DNA wraps around one UvrB monomer. DNA wrap is dependent on ATP binding by UvrB and probably causes local melting of the DNA helix, facilitating insertion of UvrB beta-hairpin between the DNA strands. Then UvrB probes one DNA strand for the presence of a lesion. If a lesion is found the UvrA subunits dissociate and the UvrB-DNA preincision complex is formed. This complex is subsequently bound by UvrC and the second UvrB is released. If no lesion is found, the DNA wraps around the other UvrB subunit that will check the other stand for damage. The protein is UvrABC system protein B of Chlorobium limicola (strain DSM 245 / NBRC 103803 / 6330).